Consider the following 43-residue polypeptide: Protein PsbN (43 aa).

A helical membrane pass occupies residues 5–27; the sequence is TLVAISISRLLVSFTGYALYTAF.

It belongs to the PsbN family.

The protein localises to the plastid. It localises to the chloroplast thylakoid membrane. May play a role in photosystem I and II biogenesis. This chain is Protein PsbN, found in Cycas taitungensis (Prince sago).